The following is a 705-amino-acid chain: MTKLGFLRLSYEKQDTLLKLLILSMAAVLSFSTRLFAVLRFESVIHEFDPYFNYRTTRFLAEEGFYKFHNWFDDRAWYPLGRIIGGTIYPGLMITSAAIYHVLHFFHITIDIRNVCVFLAPLFSSFTTIVTYHLTKELKDAGAGLLAAAMIAVVPGYISRSVAGSYDNEGIAIFCMLLTYYMWIKAVKTGSIYWAAKCALAYFYMVSSWGGYVFLINLIPLHVLVLMLTGRFSHRIYVAYCTVYCLGTILSMQISFVGFQPVLSSEHMAAFGVFGLCQIHAFVDYLRSKLNPQQFEVLFRSVISLVGFVLLTVGALLMLTGKISPWTGRFYSLLDPSYAKNNIPIIASVSEHQPTTWSSYYFDLQLLVFMFPVGLYYCFSNLSDARIFIIMYGVTSMYFSAVMVRLMLVLAPVMCILSGIGVSQVLSTYMKNLDISRPDKKSKKQQDSTYPIKNEVASGMILVMAFFLITYTFHSTWVTSEAYSSPSIVLSARGGDGSRIIFDDFREAYYWLRHNTPEDAKVMSWWDYGYQITAMANRTILVDNNTWNNTHISRVGQAMASTEEKAYEIMRELDVSYVLVIFGGLTGYSSDDINKFLWMVRIGGSTETGRHIKENDYYTPTGEFRVDREGSPVLLNCLMYKMCYYRFGQVYTEAKRPPGFDRVRNAEIGNKDFELDVLEEAYTTEHWLVRIYKVKDLDNRGLSRT.

At Met1–Leu17 the chain is on the cytoplasmic side. The helical transmembrane segment at Leu18 to Val38 threads the bilayer. Over Leu39 to Leu119 the chain is Lumenal. The short motif at Glu47–Asp49 is the DXD motif 1 element. Asp49 contributes to the Mn(2+) binding site. Residues Ala120–Leu138 form a helical membrane-spanning segment. The Cytoplasmic segment spans residues Lys139–Asp140. Residues Ala141–Ile158 form a helical membrane-spanning segment. Topologically, residues Ser159–Glu169 are lumenal. Residues Asp167 and Glu169 each coordinate Mn(2+). A DXD motif 2 motif is present at residues Asp167–Glu169. A helical membrane pass occupies residues Gly170 to Thr189. The Cytoplasmic segment spans residues Gly190–Ser191. The helical transmembrane segment at Ile192–Val206 threads the bilayer. Over Ser207–Gly211 the chain is Lumenal. A helical transmembrane segment spans residues Tyr212–Leu228. At Thr229 to Ser233 the chain is on the cytoplasmic side. A helical membrane pass occupies residues His234–Phe259. Topologically, residues Gln260 to His267 are lumenal. A helical membrane pass occupies residues Met268 to Arg287. Topologically, residues Ser288–Arg300 are cytoplasmic. The helical transmembrane segment at Ser301 to Gly321 threads the bilayer. Residues Lys322–Thr356 are Lumenal-facing. Positions Ser348–Glu351 match the SVSE motif motif. The helical transmembrane segment at Trp357–Phe379 threads the bilayer. Topologically, residues Ser380–Ala385 are cytoplasmic. The helical transmembrane segment at Arg386–Val402 threads the bilayer. Residues Met403 to Leu406 are Lumenal-facing. Arg405 is a binding site for dolichyl diphosphooligosaccharide. A helical membrane pass occupies residues Met407 to Thr428. Over Tyr429–Lys453 the chain is Cytoplasmic. Residues Asn454–Phe473 form a helical membrane-spanning segment. Residues His474–Thr705 are Lumenal-facing. An interacts with target acceptor peptide in protein substrate region spans residues Trp525–Asp527. A WWDYG motif motif is present at residues Trp525–Gly529. Tyr530 provides a ligand contact to dolichyl diphosphooligosaccharide. N-linked (GlcNAc...) asparagine glycans are attached at residues Asn537 and Asn544. Asn548 carries N-linked (GlcNAc...) (high mannose) asparagine glycosylation. The DK motif motif lies at Asp592–Met599.

Belongs to the STT3 family. In terms of assembly, component of the oligosaccharyltransferase (OST) complex. There are 2 OST complexes, OST-A and OST-B, which contain STT3A or STT3B as catalytic subunit, respectively. OST-A and OST-B contain common core subunits RPN1, RPN2, OST48, OST4, DAD1 and TMEM258, and OST-A contains DC2/OSTC and KRTCAP2/KCP2 specific accessory subunits. OST-A complex assembly occurs through the formation of 3 subcomplexes. Subcomplex 1 contains RPN1 and TMEM258, subcomplex 2 contains the OST-A-specific subunits STT3A, DC2/OSTC, and KCP2 as well as the core subunit OST4, and subcomplex 3 contains RPN2, DAD1, and OST48. The OST-A complex can form stable complexes with the Sec61 complex or with both the Sec61 and TRAP complexes. Requires Mg(2+) as cofactor. Mn(2+) is required as a cofactor.

It localises to the endoplasmic reticulum. The protein resides in the endoplasmic reticulum membrane. The catalysed reaction is a di-trans,poly-cis-dolichyl diphosphooligosaccharide + L-asparaginyl-[protein] = N(4)-(oligosaccharide-(1-&gt;4)-N-acetyl-beta-D-glucosaminyl-(1-&gt;4)-N-acetyl-beta-D-glucosaminyl)-L-asparaginyl-[protein] + a di-trans,poly-cis-dolichyl diphosphate + H(+). It participates in protein modification; protein glycosylation. In terms of biological role, catalytic subunit of the oligosaccharyl transferase (OST) complex that catalyzes the initial transfer of a defined glycan (Glc(3)Man(9)GlcNAc(2) in eukaryotes) from the lipid carrier dolichol-pyrophosphate to an asparagine residue within an Asn-X-Ser/Thr consensus motif in nascent polypeptide chains, the first step in protein N-glycosylation. N-glycosylation occurs cotranslationally and the complex associates with the Sec61 complex at the channel-forming translocon complex that mediates protein translocation across the endoplasmic reticulum (ER). All subunits are required for a maximal enzyme activity. This subunit contains the active site and the acceptor peptide and donor lipid-linked oligosaccharide (LLO) binding pockets. STT3A is present in the majority of OST complexes and mediates cotranslational N-glycosylation of most sites on target proteins, while STT3B-containing complexes are required for efficient post-translational glycosylation and mediate glycosylation of sites that have been skipped by STT3A. STT3A-containing OST-A complex is also required to prevent hyperglycosylation of some target proteins by preventing glycosylation of facultative sites before folding of target proteins is completed. The polypeptide is Dolichyl-diphosphooligosaccharide--protein glycosyltransferase subunit STT3A (Mus musculus (Mouse)).